Reading from the N-terminus, the 475-residue chain is GlcNAc-binding protein A (475 aa).

A signal peptide spans 1-27 (MPKLTQLSLVTLALTAGSTLVSQTASA). The 168-residue stretch at 28-195 (HGYVVSPESR…SFYNAIDVNF (168 aa)) folds into the Chitin-binding type-4 domain. The Chitin-binding type-3 domain maps to 426 to 468 (AGTKVLQPKTGKVYQCKPWPYNGYCVQWSPTATGFEPGIGNSW).

Belongs to the GbpA family.

The protein localises to the secreted. In terms of biological role, probably interacts with GlcNAc residues. May promote attachment to both epithelial cell surfaces and chitin. The sequence is that of GlcNAc-binding protein A from Shewanella oneidensis (strain ATCC 700550 / JCM 31522 / CIP 106686 / LMG 19005 / NCIMB 14063 / MR-1).